The chain runs to 288 residues: 3'-5' exonuclease (288 aa).

A disordered region spans residues 30-67 (RSSSSSSSAAPTVQATTSVHGHEEDPNQIPNNIRRQLP). Composition is skewed to polar residues over residues 38 to 48 (AAPTVQATTSV) and 57 to 67 (QIPNNIRRQLP). Residues 129 to 279 (FVGLDIEWRP…ASWHLYKVLK (151 aa)) enclose the 3'-5' exonuclease domain.

Interacts with KU70 and KU80. Interacts with RECQL2. Requires Mg(2+) as cofactor. Mn(2+) serves as cofactor. In terms of tissue distribution, expressed ubiquitously.

It localises to the nucleus. Its activity is regulated as follows. Activated upon interaction with the KU heterodimer. Not stimulated by ATP. In terms of biological role, exonuclease that digests recessed strands of DNA duplexes in the 3' to 5' direction but hardly single-stranded DNA or blunt-ended duplexes. Also able to digest 3'-protruding strands and 3'-recessed strand termini of duplexes containing mismatched bases. This is 3'-5' exonuclease (WEX) from Arabidopsis thaliana (Mouse-ear cress).